A 336-amino-acid chain; its full sequence is 4-hydroxy-3-methylbut-2-enyl diphosphate reductase (336 aa).

A [4Fe-4S] cluster-binding site is contributed by Cys37. The (2E)-4-hydroxy-3-methylbut-2-enyl diphosphate site is built by His66 and His99. Residues His66 and His99 each contribute to the dimethylallyl diphosphate site. Isopentenyl diphosphate contacts are provided by His66 and His99. Cys121 serves as a coordination point for [4Fe-4S] cluster. His149 contributes to the (2E)-4-hydroxy-3-methylbut-2-enyl diphosphate binding site. His149 is a dimethylallyl diphosphate binding site. His149 serves as a coordination point for isopentenyl diphosphate. The active-site Proton donor is the Glu151. Thr189 is a binding site for (2E)-4-hydroxy-3-methylbut-2-enyl diphosphate. Cys219 is a binding site for [4Fe-4S] cluster. Positions 247, 248, 249, and 292 each coordinate (2E)-4-hydroxy-3-methylbut-2-enyl diphosphate. Residues Ser247, Ser248, Asn249, and Ser292 each contribute to the dimethylallyl diphosphate site. Residues Ser247, Ser248, Asn249, and Ser292 each contribute to the isopentenyl diphosphate site.

This sequence belongs to the IspH family. [4Fe-4S] cluster is required as a cofactor.

It carries out the reaction isopentenyl diphosphate + 2 oxidized [2Fe-2S]-[ferredoxin] + H2O = (2E)-4-hydroxy-3-methylbut-2-enyl diphosphate + 2 reduced [2Fe-2S]-[ferredoxin] + 2 H(+). The enzyme catalyses dimethylallyl diphosphate + 2 oxidized [2Fe-2S]-[ferredoxin] + H2O = (2E)-4-hydroxy-3-methylbut-2-enyl diphosphate + 2 reduced [2Fe-2S]-[ferredoxin] + 2 H(+). It participates in isoprenoid biosynthesis; dimethylallyl diphosphate biosynthesis; dimethylallyl diphosphate from (2E)-4-hydroxy-3-methylbutenyl diphosphate: step 1/1. The protein operates within isoprenoid biosynthesis; isopentenyl diphosphate biosynthesis via DXP pathway; isopentenyl diphosphate from 1-deoxy-D-xylulose 5-phosphate: step 6/6. Its function is as follows. Catalyzes the conversion of 1-hydroxy-2-methyl-2-(E)-butenyl 4-diphosphate (HMBPP) into a mixture of isopentenyl diphosphate (IPP) and dimethylallyl diphosphate (DMAPP). Acts in the terminal step of the DOXP/MEP pathway for isoprenoid precursor biosynthesis. The protein is 4-hydroxy-3-methylbut-2-enyl diphosphate reductase of Nocardia farcinica (strain IFM 10152).